Reading from the N-terminus, the 158-residue chain is Large ribosomal subunit protein uL11 (158 aa).

Residues 1–28 (MAGTIEALVPGGQATPGPPLGPELGPTP) are disordered.

It belongs to the universal ribosomal protein uL11 family. Part of the ribosomal stalk of the 50S ribosomal subunit. Interacts with L10 and the large rRNA to form the base of the stalk. L10 forms an elongated spine to which L12 dimers bind in a sequential fashion forming a multimeric L10(L12)X complex.

Forms part of the ribosomal stalk which helps the ribosome interact with GTP-bound translation factors. The sequence is that of Large ribosomal subunit protein uL11 from Halorubrum lacusprofundi (strain ATCC 49239 / DSM 5036 / JCM 8891 / ACAM 34).